We begin with the raw amino-acid sequence, 154 residues long: MDSTELNRVFQMFDKDGDGKITTKELNESFKNLGIIIPEDELTQIIQKIDVNGDGCVDIEEFGELYKTIMVEDEDEVGEEDMKEAFNVFDRNGDGFITVDELKAVLSSLGLKQGKTLEECRKMIMQVDVDGDGRVNYMEFRQMMKKGRFFSSLS.

EF-hand domains follow at residues 1–36 (MDST…LGII), 37–72 (IPED…IMVE), 77–112 (VGEE…LGLK), and 115–150 (KTLE…GRFF). 19 residues coordinate Ca(2+): Asp14, Asp16, Asp18, Lys20, Glu25, Asp50, Asn52, Asp54, Cys56, Glu61, Asp90, Asn92, Asp94, Glu101, Asp128, Asp130, Asp132, Arg134, and Glu139.

The protein belongs to the calmodulin family.

In terms of biological role, potential calcium sensor. The polypeptide is Calmodulin-like protein 6 (CML6) (Arabidopsis thaliana (Mouse-ear cress)).